The chain runs to 273 residues: Beta-lactamase OXA-23 (273 aa).

Positions 1-17 (MNKYFTCYVVASLFLSG) are cleaved as a signal peptide. Residue Ser-79 is the Acyl-ester intermediate of the active site. Residues Ser-79, Lys-82, Ser-126, Thr-217, Trp-219, and Arg-259 each contribute to the a beta-lactam site. N6-carboxylysine is present on Lys-82.

The protein belongs to the class-D beta-lactamase family. As to quaternary structure, monomer. In terms of processing, carboxylated on the epsilon-amino group of a lysine, with the resulting carbamate functional group serving as a general base. Probably N-carboxylated at Lys-82 at neutral pH in vivo and undergoes complete N-decarboxylation, at pH 4.1, in vitro.

It is found in the periplasm. It catalyses the reaction a beta-lactam + H2O = a substituted beta-amino acid. With respect to regulation, inhibited by the desmethyl carbapenem, MA-1-206, via a covalent binding to Ser-79. In terms of biological role, class D beta-lactamase which confers resistance to the beta-lactam antibiotics, including ampicillin, and carbapenems such as imipenem and meropenem. Acts via hydrolysis of the beta-lactam ring. Has penicillin-, cephalosporin- and carbapenem-hydrolyzing activities, but lacks ceftazidime-hydrolyzing activity. This is Beta-lactamase OXA-23 from Acinetobacter baumannii.